The following is a 427-amino-acid chain: Light-independent protochlorophyllide reductase subunit N (427 aa).

[4Fe-4S] cluster is bound by residues cysteine 28, cysteine 53, and cysteine 114.

Belongs to the BchN/ChlN family. In terms of assembly, protochlorophyllide reductase is composed of three subunits; BchL, BchN and BchB. Forms a heterotetramer of two BchB and two BchN subunits. Requires [4Fe-4S] cluster as cofactor.

It catalyses the reaction chlorophyllide a + oxidized 2[4Fe-4S]-[ferredoxin] + 2 ADP + 2 phosphate = protochlorophyllide a + reduced 2[4Fe-4S]-[ferredoxin] + 2 ATP + 2 H2O. Its pathway is porphyrin-containing compound metabolism; bacteriochlorophyll biosynthesis (light-independent). Functionally, component of the dark-operative protochlorophyllide reductase (DPOR) that uses Mg-ATP and reduced ferredoxin to reduce ring D of protochlorophyllide (Pchlide) to form chlorophyllide a (Chlide). This reaction is light-independent. The NB-protein (BchN-BchB) is the catalytic component of the complex. The protein is Light-independent protochlorophyllide reductase subunit N of Dinoroseobacter shibae (strain DSM 16493 / NCIMB 14021 / DFL 12).